Here is a 2059-residue protein sequence, read N- to C-terminus: DNA polymerase theta (2059 aa).

The segment at 25–45 is disordered; that stretch reads DKENAQPGNGNIQVQSAGNEV. Polar residues predominate over residues 30-45; the sequence is QPGNGNIQVQSAGNEV. A Helicase ATP-binding domain is found at 243–416; the sequence is PRLLFEHCNL…WLDAELYITN (174 aa). 256 to 263 lines the ATP pocket; it reads APTSAGKT. Residues 357-360 carry the DEAH box motif; the sequence is DEVH. The 203-residue stretch at 464 to 666 folds into the Helicase C-terminal domain; the sequence is CIETLLEGCS…HLKRALLEVI (203 aa). Disordered stretches follow at residues 1052–1073, 1168–1190, 1204–1274, and 1330–1372; these read PPVK…KNPR, PQLA…VNEG, QRTQ…SRKV, and PHAS…GVSS. Residues 1062–1071 show a composition bias toward polar residues; it reads ENGTANSQKN. A compositionally biased stretch (polar residues) spans 1213-1274; the sequence is KDQPIQASRS…NANRTASRKV (62 aa). Residues 1355-1365 are compositionally biased toward basic and acidic residues; it reads REIEIDLESKN.

Belongs to the DNA polymerase type-A family. Requires Mg(2+) as cofactor. In terms of processing, in adult males, cleaved to produce a 100 kDa form. In terms of tissue distribution, expressed in ovaries (at protein level).

Its subcellular location is the nucleus. It catalyses the reaction DNA(n) + a 2'-deoxyribonucleoside 5'-triphosphate = DNA(n+1) + diphosphate. With respect to regulation, resistant to aphidicolin, but sensitive to dideoxythymindine triphosphate (ddTTP) and N-ethyl malemide (NEM). Multifunctional protein with both DNA polymerase and ATPase activities. Might have 3' to 5' exonuclease activity. Plays a role in different DNA repair pathways such as DNA strand cross-link repair and microhomology-mediated end-joining (MMEJ), an alternative non-homologous end-joining (NHEJ) machinery triggered in response to double-strand breaks. MMEJ is an error-prone repair pathway that produces deletions of sequences from the strand being repaired and promotes genomic rearrangements, such as telomere fusions. Utilizes short microhomologies present in partially and fully single-stranded DNA (ssDNA) as primers for DNA synthesis. Prefers poly(dA)/oligo(dT) as a template-primer. The ATPase activity is necessary during interstrand cross-link (ICL) repair and has a critical role in generating templated insertions during MMEJ. Necessary for processing DNA damage induced by oxygen and N-ethylation. In follicle cells, contributes to double-strand break repair at physiological rereplication forks necessary for survival of fertilized eggs. The sequence is that of DNA polymerase theta from Drosophila melanogaster (Fruit fly).